Reading from the N-terminus, the 477-residue chain is ETS translocation variant 1 (477 aa).

Serine 94 is subject to Phosphoserine. Positions 128-178 (PQVGMRPSNPPTPSSTPVSPLHHASPNSAHTSKPDRAFPAHLPPSQPIQDS) are disordered. A phosphoserine; by RPS6KA1 and RPS6KA5 mark is found at serine 191 and serine 216. Lysine 317 participates in a covalent cross-link: Glycyl lysine isopeptide (Lys-Gly) (interchain with G-Cter in SUMO2). A DNA-binding region (ETS) is located at residues 335–415 (LQLWQFLVAL…AGERYVYKFV (81 aa)).

The protein belongs to the ETS family. Post-translationally, sumoylated. In terms of processing, phosphorylated at Ser-191 and Ser-216 by RPS6KA1 and RPS6KA5; phosphorylation activates transcriptional activity.

It is found in the nucleus. Functionally, transcriptional activator that binds to DNA sequences containing the consensus pentanucleotide 5'-CGGA[AT]-3'. Required for olfactory dopaminergic neuron differentiation; may directly activate expression of tyrosine hydroxylase (TH). In Bos taurus (Bovine), this protein is ETS translocation variant 1 (ETV1).